We begin with the raw amino-acid sequence, 2021 residues long: U3 small nucleolar RNA-associated protein 10 (2021 aa).

HEAT repeat units lie at residues 837 to 875 (PVDF…GEGM), 976 to 1014 (TSIL…YVQA), 1281 to 1319 (EKTV…FTDM), 1935 to 1973 (ENVL…AQAE), and 1977 to 2015 (GLVP…VTGS).

The protein belongs to the HEATR1/UTP10 family. In terms of assembly, component of the ribosomal small subunit (SSU) processome.

The protein localises to the nucleus. Its subcellular location is the nucleolus. Functionally, involved in nucleolar processing of pre-18S ribosomal RNA. Involved in ribosome biosynthesis. The sequence is that of U3 small nucleolar RNA-associated protein 10 (UTP10) from Cryptococcus neoformans var. neoformans serotype D (strain JEC21 / ATCC MYA-565) (Filobasidiella neoformans).